Reading from the N-terminus, the 145-residue chain is Immune protein Tsi3 (145 aa).

The signal sequence occupies residues Met-1–Ala-15. A lipid anchor (N-palmitoyl cysteine) is attached at Cys-16. A lipid anchor (S-diacylglycerol cysteine) is attached at Cys-16. Residues Phe-53–Asp-85 are disordered. Glu-126 contacts Ca(2+).

In terms of assembly, forms a heterotetramer with Tse3 consisting of two Tse3 dimers and two Tsi3 dimers. Formation of the complex inactivates Tse3 enzymatic activity.

Immunity protein that plays a role in preventing early activation of toxin Tse3. Occupies Tse3 substrate binding site and prevents the substrate from entering. The protein is Immune protein Tsi3 of Pseudomonas aeruginosa (strain ATCC 15692 / DSM 22644 / CIP 104116 / JCM 14847 / LMG 12228 / 1C / PRS 101 / PAO1).